The following is a 202-amino-acid chain: Protein-methionine-sulfoxide reductase heme-binding subunit MsrQ (202 aa).

The next 5 membrane-spanning stretches (helical) occupy residues 8 to 28 (IVWLKVLLHLAGFLPLVWLFW), 82 to 102 (LWCFAWATLHLTSYTLLELGI), 116 to 136 (PYLTLGMISWAILLALAVTST), 149 to 169 (LLHNFVYLVAILAPIHYLWSV), and 171 to 191 (IVSPQPVVYALLAAGLLTWRY).

This sequence belongs to the MsrQ family. As to quaternary structure, heterodimer of a catalytic subunit (MsrP) and a heme-binding subunit (MsrQ). The cofactor is FMN. It depends on heme b as a cofactor.

It is found in the cell inner membrane. Its function is as follows. Part of the MsrPQ system that repairs oxidized periplasmic proteins containing methionine sulfoxide residues (Met-O), using respiratory chain electrons. Thus protects these proteins from oxidative-stress damage caused by reactive species of oxygen and chlorine generated by the host defense mechanisms. MsrPQ is essential for the maintenance of envelope integrity under bleach stress, rescuing a wide series of structurally unrelated periplasmic proteins from methionine oxidation. MsrQ provides electrons for reduction to the reductase catalytic subunit MsrP, using the quinone pool of the respiratory chain. This chain is Protein-methionine-sulfoxide reductase heme-binding subunit MsrQ, found in Klebsiella pneumoniae subsp. pneumoniae (strain ATCC 700721 / MGH 78578).